A 206-amino-acid polypeptide reads, in one-letter code: MKAKREALISLFHAIKEEKVDSDIIDLLLLINSIKGIYTTSSCSGRIGILEEPSLGAKPLSRWLIKVHRPMSFEEARDALKRAREGLIFLKSQPPIFHVVAETIENAKLVHEIGLASGFKYTTFKAISSRFLVEINGTEYLTVPLGKDGRIIASDEYLKFAISIGNKMLERGKSKLPRLRDNFEKIKKKLGEDPLFIQLKREILEI.

This sequence belongs to the TYW3 family.

It catalyses the reaction 4-demethyl-7-[(3S)-3-amino-3-carboxypropyl]wyosine(37) in tRNA(Phe) + S-adenosyl-L-methionine = 7-[(3S)-3-amino-3-carboxypropyl]wyosine(37) in tRNA(Phe) + S-adenosyl-L-homocysteine + H(+). Its function is as follows. S-adenosyl-L-methionine-dependent methyltransferase that acts as a component of the wyosine derivatives biosynthesis pathway. Probably methylates N-4 position of wybutosine-86 to produce wybutosine-72. The chain is tRNA(Phe) 7-((3-amino-3-carboxypropyl)-4-demethylwyosine(37)-N(4))-methyltransferase 2 from Pyrococcus horikoshii (strain ATCC 700860 / DSM 12428 / JCM 9974 / NBRC 100139 / OT-3).